The primary structure comprises 922 residues: Cell surface glycoprotein 2 (922 aa).

The N-terminal stretch at 1-23 (MTGNSDKVRSLFLTALMVFSVFA) is a signal peptide. N-linked (GlcNAc...) asparagine glycans are attached at residues asparagine 37, asparagine 56, asparagine 110, asparagine 220, asparagine 251, asparagine 262, and asparagine 292. Residue asparagine 307 is glycosylated (N-linked (GalNAc...) asparagine). Asparagine 319, asparagine 344, asparagine 396, asparagine 437, asparagine 490, asparagine 523, asparagine 557, asparagine 574, asparagine 587, asparagine 616, asparagine 700, asparagine 717, asparagine 809, asparagine 838, and asparagine 847 each carry an N-linked (GlcNAc...) asparagine glycan. A disordered region spans residues 816–899 (PHQDTNGNEE…GTETTEAEGP (84 aa)). Over residues 835–850 (YTQNGSAVTDSANVTV) the composition is skewed to polar residues. Residues 853-887 (EEPEDTPEDTPEDTPEDTPEDTPEDTPADTPEDTP) show a composition bias toward acidic residues. Over residues 888-899 (DTGTETTEAEGP) the composition is skewed to low complexity. Residues 898–918 (GPGFTAAIALIALVAAALLAV) traverse the membrane as a helical segment. The PGF sorting signal signature appears at 899–901 (PGF).

Belongs to the halobacterial S-layer protein family. In terms of processing, N-glycosylated on Asn-307; this N-linked glycan is a branched trisaccharide containing 2-amino-6-sulfo-2,6-dideoxy-glucose (sulfoquinovosamine). Post-translationally, O-glycosylated on Thr residues within the DTPE repeats in the C-terminal region; glycans consist of Glc-Gal disaccharides. Cleaved by the archaeosortase ArtA at the C-terminus, with removal of a short hydrophobic segment. In terms of processing, lipidation.

The protein resides in the secreted. It is found in the cell wall. The protein localises to the S-layer. Its subcellular location is the cell membrane. S-layer protein. The S-layer is a paracrystalline mono-layered assembly of proteins which coat the surface of the cell. In H.hispanica, the S-layer contains two different glycoproteins, Slg1 and Slg2, which share highly similar amino acid sequences. This is Cell surface glycoprotein 2 from Haloarcula hispanica (strain ATCC 33960 / DSM 4426 / JCM 8911 / NBRC 102182 / NCIMB 2187 / VKM B-1755).